The sequence spans 261 residues: V-type proton ATPase subunit D (261 aa).

At serine 241 the chain carries Phosphoserine.

This sequence belongs to the V-ATPase D subunit family. In terms of assembly, V-ATPase is a heteromultimeric enzyme composed of a peripheral catalytic V1 complex (components A to H) attached to an integral membrane V0 proton pore complex (components: a, c, c'', d and e).

It localises to the vacuole membrane. Subunit of the peripheral V1 complex of vacuolar ATPase. V-ATPase is responsible for acidifying a variety of intracellular compartments in eukaryotic cells, thus providing most of the energy required for transport processes in the vacuolar system. In Arabidopsis thaliana (Mouse-ear cress), this protein is V-type proton ATPase subunit D (VHA-D).